The sequence spans 452 residues: Enolase (452 aa).

Glutamine 167 is a binding site for (2R)-2-phosphoglycerate. The active-site Proton donor is the glutamate 209. Residues aspartate 250, glutamate 307, and aspartate 334 each coordinate Mg(2+). The (2R)-2-phosphoglycerate site is built by lysine 359, arginine 388, serine 389, and lysine 410. Lysine 359 functions as the Proton acceptor in the catalytic mechanism.

Belongs to the enolase family. It depends on Mg(2+) as a cofactor.

It localises to the cytoplasm. It is found in the secreted. The protein resides in the cell surface. The enzyme catalyses (2R)-2-phosphoglycerate = phosphoenolpyruvate + H2O. The protein operates within carbohydrate degradation; glycolysis; pyruvate from D-glyceraldehyde 3-phosphate: step 4/5. Catalyzes the reversible conversion of 2-phosphoglycerate (2-PG) into phosphoenolpyruvate (PEP). It is essential for the degradation of carbohydrates via glycolysis. The protein is Enolase of Mesomycoplasma hyopneumoniae (strain 232) (Mycoplasma hyopneumoniae).